The following is a 190-amino-acid chain: MLYLASRSPRRQELLQRLDVPFQTLQLDVPELRAADESPDQYVQRVALEKAHAGLALVQAADPDAIVLGSDTEVVLGERVFGKPVDVDDAVAMLRALSGRTHQVLTAVVLVCAQRAPAQALVVSEVTFDTLDDAQIAAYAACGEPMGKAGAYAIQGRAERFIRHLSGSYSGVMGLPLYHTSQLLTAFGAH.

Catalysis depends on aspartate 71, which acts as the Proton acceptor.

The protein belongs to the Maf family. YhdE subfamily. A divalent metal cation is required as a cofactor.

It localises to the cytoplasm. The enzyme catalyses dTTP + H2O = dTMP + diphosphate + H(+). It carries out the reaction UTP + H2O = UMP + diphosphate + H(+). Nucleoside triphosphate pyrophosphatase that hydrolyzes dTTP and UTP. May have a dual role in cell division arrest and in preventing the incorporation of modified nucleotides into cellular nucleic acids. The protein is dTTP/UTP pyrophosphatase of Xanthomonas euvesicatoria pv. vesicatoria (strain 85-10) (Xanthomonas campestris pv. vesicatoria).